The following is a 66-amino-acid chain: Beta-mammal toxin Cv1 (66 aa).

The region spanning 1 to 66 is the LCN-type CS-alpha/beta domain; the sequence is KEGYIVNLST…VWPLPKKTCN (66 aa). Cystine bridges form between cysteine 12–cysteine 65, cysteine 16–cysteine 41, cysteine 25–cysteine 46, and cysteine 29–cysteine 48.

As to expression, expressed by the venom gland.

The protein localises to the secreted. With respect to regulation, is susceptible to be neutralized by human antibodies scFvs 10FG2 and HV. In terms of biological role, beta toxins bind voltage-independently at site-4 of sodium channels (Nav) and reduces peak current and shifts the voltage of activation toward more negative potentials thereby affecting sodium channel activation and promoting spontaneous and repetitive firing. This toxin is slightly toxic to mice. The chain is Beta-mammal toxin Cv1 from Centruroides villegasi (Scorpion).